The following is a 331-amino-acid chain: Phosphoribosylformylglycinamidine cyclo-ligase (331 aa).

This sequence belongs to the AIR synthase family.

It localises to the cytoplasm. The enzyme catalyses 2-formamido-N(1)-(5-O-phospho-beta-D-ribosyl)acetamidine + ATP = 5-amino-1-(5-phospho-beta-D-ribosyl)imidazole + ADP + phosphate + H(+). It participates in purine metabolism; IMP biosynthesis via de novo pathway; 5-amino-1-(5-phospho-D-ribosyl)imidazole from N(2)-formyl-N(1)-(5-phospho-D-ribosyl)glycinamide: step 2/2. This Clostridium botulinum (strain Langeland / NCTC 10281 / Type F) protein is Phosphoribosylformylglycinamidine cyclo-ligase.